The primary structure comprises 242 residues: Probable transcriptional regulatory protein NMA1902 (242 aa).

This sequence belongs to the TACO1 family.

It localises to the cytoplasm. This chain is Probable transcriptional regulatory protein NMA1902, found in Neisseria meningitidis serogroup A / serotype 4A (strain DSM 15465 / Z2491).